The sequence spans 363 residues: Cobalt-precorrin-5B C(1)-methyltransferase (363 aa).

It belongs to the CbiD family.

The enzyme catalyses Co-precorrin-5B + S-adenosyl-L-methionine = Co-precorrin-6A + S-adenosyl-L-homocysteine. The protein operates within cofactor biosynthesis; adenosylcobalamin biosynthesis; cob(II)yrinate a,c-diamide from sirohydrochlorin (anaerobic route): step 6/10. Its function is as follows. Catalyzes the methylation of C-1 in cobalt-precorrin-5B to form cobalt-precorrin-6A. In Burkholderia pseudomallei (strain K96243), this protein is Cobalt-precorrin-5B C(1)-methyltransferase.